The following is a 311-amino-acid chain: Interleukin-20 receptor subunit beta (311 aa).

The N-terminal stretch at 1-29 is a signal peptide; that stretch reads MQTFTMVLEEIWTSLFMWFFYALIPCLLT. Over 30–233 the chain is Extracellular; that stretch reads DEVAILPAPQ…VEVQGEAIPL (204 aa). Fibronectin type-III domains are found at residues 37-136 and 144-228; these read APQN…RNST and EITK…EVQG. An N-linked (GlcNAc...) asparagine glycan is attached at Asn-40. A disulfide bridge connects residues Cys-89 and Cys-97. An N-linked (GlcNAc...) asparagine glycan is attached at Asn-134. Cys-202 and Cys-223 form a disulfide bridge. The helical transmembrane segment at 234–254 threads the bilayer; it reads VLALFAFVGFMLILVVVPLFV. At 255 to 311 the chain is on the cytoplasmic side; sequence WKMGRLLQYSCCPVVVLPDTLKITNSPQKLISCRREEVDACATAVMSPEELLRAWIS.

The protein belongs to the type II cytokine receptor family. As to quaternary structure, heterodimer with IL20RA and heterodimer with IL22RA1. In terms of tissue distribution, widely expressed with highest levels in skin and testis. Highly expressed in psoriatic skin.

The protein localises to the membrane. Its function is as follows. The IL20RA/IL20RB dimer is a receptor for IL19, IL20 and IL24. The IL22RA1/IL20RB dimer is a receptor for IL20 and IL24. This chain is Interleukin-20 receptor subunit beta (IL20RB), found in Homo sapiens (Human).